A 142-amino-acid polypeptide reads, in one-letter code: Transcription antitermination protein NusB (142 aa).

The protein belongs to the NusB family.

Functionally, involved in transcription antitermination. Required for transcription of ribosomal RNA (rRNA) genes. Binds specifically to the boxA antiterminator sequence of the ribosomal RNA (rrn) operons. In Buchnera aphidicola subsp. Cinara cedri (strain Cc), this protein is Transcription antitermination protein NusB.